A 102-amino-acid chain; its full sequence is Alpha-hemoglobin-stabilizing protein (102 aa).

Belongs to the AHSP family. As to quaternary structure, monomer. Forms a heterodimer with free alpha-hemoglobin. Does not bind beta-hemoglobin nor alpha(2)beta(2) hemoglobin A. Expressed in blood and bone marrow.

The protein localises to the cytoplasm. In terms of biological role, acts as a chaperone to prevent the harmful aggregation of alpha-hemoglobin during normal erythroid cell development. Specifically protects free alpha-hemoglobin from precipitation. It is predicted to modulate pathological states of alpha-hemoglobin excess such as beta-thalassemia. The polypeptide is Alpha-hemoglobin-stabilizing protein (AHSP) (Homo sapiens (Human)).